The sequence spans 306 residues: GTP cyclohydrolase FolE2 (306 aa).

The protein belongs to the GTP cyclohydrolase IV family.

The catalysed reaction is GTP + H2O = 7,8-dihydroneopterin 3'-triphosphate + formate + H(+). It participates in cofactor biosynthesis; 7,8-dihydroneopterin triphosphate biosynthesis; 7,8-dihydroneopterin triphosphate from GTP: step 1/1. In terms of biological role, converts GTP to 7,8-dihydroneopterin triphosphate. The polypeptide is GTP cyclohydrolase FolE2 (Xanthomonas oryzae pv. oryzae (strain MAFF 311018)).